Here is a 314-residue protein sequence, read N- to C-terminus: MEDKNQTVVTEFLLLGLTDHPYQKIVLFFMFLFVYLITLGGNLGMITLIWIDPRLHTPMYFFLRHLSFVDICSSSSVVPKMLCNIFAEKKDITFLGCAAQMWFFGLFEAAECFLLAAMAYDRYVAICKPLLYTLIMSQQVCMQLVVGPYAMALISTMTHTIFTFCLPFCGSNIINHFFCDIFPLLSLACADTWVNKFVLFVLAGAIGVLSGLIIMVSYICILMTILKIQTADGKQKAFFTCFSHLAAVSILYGTLFLIYVRPSSSSSLGIYKVISLFYTVVIPMVNPLIYSLRNKEVKDAFRRKIERKKFIIGR.

The Extracellular segment spans residues 1–24; sequence MEDKNQTVVTEFLLLGLTDHPYQK. Asparagine 5 carries N-linked (GlcNAc...) asparagine glycosylation. The helical transmembrane segment at 25-45 threads the bilayer; it reads IVLFFMFLFVYLITLGGNLGM. At 46 to 97 the chain is on the cytoplasmic side; the sequence is ITLIWIDPRLHTPMYFFLRHLSFVDICSSSSVVPKMLCNIFAEKKDITFLGC. The cysteines at positions 97 and 179 are disulfide-linked. A helical membrane pass occupies residues 98–118; it reads AAQMWFFGLFEAAECFLLAAM. Residues 119 to 143 are Extracellular-facing; the sequence is AYDRYVAICKPLLYTLIMSQQVCMQ. Residues 144-164 form a helical membrane-spanning segment; it reads LVVGPYAMALISTMTHTIFTF. Topologically, residues 165-167 are cytoplasmic; it reads CLP. A helical transmembrane segment spans residues 168 to 188; sequence FCGSNIINHFFCDIFPLLSLA. The Extracellular portion of the chain corresponds to 189–196; sequence CADTWVNK. Residues 197 to 217 traverse the membrane as a helical segment; the sequence is FVLFVLAGAIGVLSGLIIMVS. Over 218-237 the chain is Cytoplasmic; that stretch reads YICILMTILKIQTADGKQKA. Residues 238 to 258 form a helical membrane-spanning segment; that stretch reads FFTCFSHLAAVSILYGTLFLI. Residues 259–268 lie on the Extracellular side of the membrane; sequence YVRPSSSSSL. The helical transmembrane segment at 269–289 threads the bilayer; that stretch reads GIYKVISLFYTVVIPMVNPLI. Residues 290–314 lie on the Cytoplasmic side of the membrane; it reads YSLRNKEVKDAFRRKIERKKFIIGR.

Belongs to the G-protein coupled receptor 1 family.

The protein localises to the cell membrane. Odorant receptor. The sequence is that of Olfactory receptor 5G3 (OR5G3) from Homo sapiens (Human).